Consider the following 218-residue polypeptide: MSSGNTKDKHRAYKRKGSPGRDERKRPWQPHHRSRSRSPIRRSGETSSGSYRQEHQISHLSSCTASKISDPVTKTKENTSGKRDSRTNPYTVFSQHKASHPDAPGWCGFYWHSTRIARNGTNAIFNEMKQQFQQLQLDNKIGWDSARELLFSQKKSLDQQYRNMFWHFRNASDCERCNYWDNVYRMHLAHVSSQTESEEITDEEMLSAAESMETDASN.

Disordered stretches follow at residues 1 to 89 and 195 to 218; these read MSSG…RTNP and TESE…DASN. Composition is skewed to basic residues over residues 8–18 and 27–40; these read DKHRAYKRKGS and PWQP…RSPI. Over residues 58 to 67 the composition is skewed to polar residues; the sequence is SHLSSCTASK. The segment covering 73 to 86 has biased composition (basic and acidic residues); sequence TKTKENTSGKRDSR. Residues 196-205 show a composition bias toward acidic residues; sequence ESEEITDEEM.

This sequence belongs to the Bocaparvovirus Non-structural protein NP-1 family.

The protein resides in the host nucleus. Its function is as follows. Required for the expression of the capsid proteins. Performs the splicing and internal polyadenylation of the viral capsid-encoding mRNA precursor, which allows its maturation and expression. Transactivates the viral promoter. The polypeptide is Non-structural protein NP-1 (NP1) (Human bocavirus 3 (HBoV3)).